Consider the following 374-residue polypeptide: Flagellar P-ring protein (374 aa).

The signal sequence occupies residues 1–29 (MPGVGISRIVRIAVAALVALAPLMTPAHA).

This sequence belongs to the FlgI family. In terms of assembly, the basal body constitutes a major portion of the flagellar organelle and consists of four rings (L,P,S, and M) mounted on a central rod.

It localises to the periplasm. It is found in the bacterial flagellum basal body. Assembles around the rod to form the L-ring and probably protects the motor/basal body from shearing forces during rotation. This is Flagellar P-ring protein from Nitrobacter hamburgensis (strain DSM 10229 / NCIMB 13809 / X14).